Here is a 200-residue protein sequence, read N- to C-terminus: Recombination protein RecR (200 aa).

The C4-type zinc-finger motif lies at 60–75; the sequence is CVYCQALTEDDVCNIC. A Toprim domain is found at 83–177; it reads TKLCIIESML…KISRIGFGVP (95 aa).

It belongs to the RecR family.

May play a role in DNA repair. It seems to be involved in an RecBC-independent recombinational process of DNA repair. It may act with RecF and RecO. The chain is Recombination protein RecR from Francisella tularensis subsp. holarctica (strain OSU18).